The sequence spans 219 residues: Transcriptional regulatory protein QseB (219 aa).

The Response regulatory domain maps to Arg-2–Met-116. Asp-51 is subject to 4-aspartylphosphate. The ompR/PhoB-type DNA-binding region spans Ser-124–Glu-218.

Phosphorylated by QseC.

The protein resides in the cytoplasm. Member of a two-component regulatory system QseB/QseC. Activates the flagella regulon by activating transcription of FlhDC. Currently it is not known whether this effect is direct or not. This chain is Transcriptional regulatory protein QseB (qseB), found in Escherichia coli O157:H7.